Reading from the N-terminus, the 527-residue chain is Catalase (527 aa).

Basic and acidic residues predominate over residues Met1–Gln22. Residues Met1–Pro34 form a disordered region. An N-acetylserine modification is found at Ser2. Ser9 carries the phosphoserine modification. An N6-succinyllysine modification is found at Lys13. At Ser21 the chain carries Phosphoserine. Catalysis depends on residues His75 and Asn148. NADP(+)-binding residues include His194, Ser201, Arg203, and Asn213. Position 221 is an N6-succinyllysine (Lys221). Lys233 carries the post-translational modification N6-acetyllysine. NADP(+) contacts are provided by Lys237, Trp303, His305, and Lys306. An N6-acetyllysine; alternate modification is found at Lys306. At Lys306 the chain carries N6-succinyllysine; alternate. Residue Tyr358 coordinates heme. A phosphoserine mark is found at Ser417 and Ser422. Residue Lys430 is modified to N6-acetyllysine; alternate. N6-succinyllysine; alternate is present on Lys430. A Phosphoserine modification is found at Ser434. 2 positions are modified to N6-acetyllysine; alternate: Lys449 and Lys480. 2 positions are modified to N6-succinyllysine; alternate: Lys449 and Lys480. Lys499 carries the post-translational modification N6-acetyllysine. Residue Thr511 is modified to Phosphothreonine. Ser517 carries the phosphoserine modification. Lys522 bears the N6-succinyllysine mark. A Microbody targeting signal; atypical motif is present at residues Lys524 to Leu527.

It belongs to the catalase family. As to quaternary structure, homotetramer. Interacts (via microbody targeting signal) with PEX5, monomeric form interacts with PEX5, leading to its translocation into peroxisomes. The cofactor is heme. NADP(+) serves as cofactor.

It localises to the peroxisome matrix. It catalyses the reaction 2 H2O2 = O2 + 2 H2O. Functionally, catalyzes the degradation of hydrogen peroxide (H(2)O(2)) generated by peroxisomal oxidases to water and oxygen, thereby protecting cells from the toxic effects of hydrogen peroxide. Promotes growth of cells including T-cells, B-cells, myeloid leukemia cells, melanoma cells, mastocytoma cells and normal and transformed fibroblast cells. This Mus musculus (Mouse) protein is Catalase (Cat).